Here is a 405-residue protein sequence, read N- to C-terminus: Na(+)-translocating NADH-quinone reductase subunit F (405 aa).

The helical transmembrane segment at 3-23 threads the bilayer; it reads IILGIVMFTVIVLALALMILF. The 93-residue stretch at 32–124 folds into the 2Fe-2S ferredoxin-type domain; that stretch reads GDITIKVNDE…DMDIEVPEEV (93 aa). [2Fe-2S] cluster is bound by residues Cys67, Cys73, Cys76, and Cys108. The FAD-binding FR-type domain maps to 127–267; sequence VKKWECTVIS…SGPFGEFFAK (141 aa).

Belongs to the NqrF family. As to quaternary structure, composed of six subunits; NqrA, NqrB, NqrC, NqrD, NqrE and NqrF. The cofactor is [2Fe-2S] cluster. Requires FAD as cofactor.

It is found in the cell inner membrane. It catalyses the reaction a ubiquinone + n Na(+)(in) + NADH + H(+) = a ubiquinol + n Na(+)(out) + NAD(+). In terms of biological role, NQR complex catalyzes the reduction of ubiquinone-1 to ubiquinol by two successive reactions, coupled with the transport of Na(+) ions from the cytoplasm to the periplasm. The first step is catalyzed by NqrF, which accepts electrons from NADH and reduces ubiquinone-1 to ubisemiquinone by a one-electron transfer pathway. The sequence is that of Na(+)-translocating NADH-quinone reductase subunit F from Neisseria gonorrhoeae (strain ATCC 700825 / FA 1090).